A 95-amino-acid polypeptide reads, in one-letter code: Large ribosomal subunit protein uL23 (95 aa).

It belongs to the universal ribosomal protein uL23 family. Part of the 50S ribosomal subunit. Contacts protein L29, and trigger factor when it is bound to the ribosome.

In terms of biological role, one of the early assembly proteins it binds 23S rRNA. One of the proteins that surrounds the polypeptide exit tunnel on the outside of the ribosome. Forms the main docking site for trigger factor binding to the ribosome. The protein is Large ribosomal subunit protein uL23 of Thermodesulfovibrio yellowstonii (strain ATCC 51303 / DSM 11347 / YP87).